A 250-amino-acid chain; its full sequence is Proteasome subunit alpha type-7-B (250 aa).

A Glycyl lysine isopeptide (Lys-Gly) (interchain with G-Cter in ubiquitin) cross-link involves residue Lys-62.

This sequence belongs to the peptidase T1A family. As to quaternary structure, component of the 20S core complex of the 26S proteasome. The 26S proteasome is composed of a core protease (CP), known as the 20S proteasome, capped at one or both ends by the 19S regulatory particle (RP/PA700). The 20S proteasome core is composed of 28 subunits that are arranged in four stacked rings, resulting in a barrel-shaped structure. The two end rings are each formed by seven alpha subunits, and the two central rings are each formed by seven beta subunits. The catalytic chamber with the active sites is on the inside of the barrel.

Its subcellular location is the cytoplasm. It localises to the nucleus. Its function is as follows. The proteasome is a multicatalytic proteinase complex which is characterized by its ability to cleave peptides with Arg, Phe, Tyr, Leu, and Glu adjacent to the leaving group at neutral or slightly basic pH. The proteasome has an ATP-dependent proteolytic activity. This is Proteasome subunit alpha type-7-B (PAD2) from Arabidopsis thaliana (Mouse-ear cress).